We begin with the raw amino-acid sequence, 80 residues long: Metallothionein-like protein BIF98 (80 aa).

Belongs to the metallothionein superfamily. Type 15 family.

Its function is as follows. Metallothioneins have a high content of cysteine residues that bind various heavy metals. The protein is Metallothionein-like protein BIF98 of Brassica rapa subsp. pekinensis (Chinese cabbage).